We begin with the raw amino-acid sequence, 338 residues long: Aspartate carbamoyltransferase catalytic subunit (338 aa).

Arginine 59 and threonine 60 together coordinate carbamoyl phosphate. Residue lysine 87 coordinates L-aspartate. The carbamoyl phosphate site is built by arginine 109, histidine 142, and glutamine 145. Positions 182 and 248 each coordinate L-aspartate. Carbamoyl phosphate-binding residues include glycine 289 and proline 290.

It belongs to the aspartate/ornithine carbamoyltransferase superfamily. ATCase family. As to quaternary structure, heterododecamer (2C3:3R2) of six catalytic PyrB chains organized as two trimers (C3), and six regulatory PyrI chains organized as three dimers (R2).

The catalysed reaction is carbamoyl phosphate + L-aspartate = N-carbamoyl-L-aspartate + phosphate + H(+). It functions in the pathway pyrimidine metabolism; UMP biosynthesis via de novo pathway; (S)-dihydroorotate from bicarbonate: step 2/3. Its function is as follows. Catalyzes the condensation of carbamoyl phosphate and aspartate to form carbamoyl aspartate and inorganic phosphate, the committed step in the de novo pyrimidine nucleotide biosynthesis pathway. This chain is Aspartate carbamoyltransferase catalytic subunit, found in Synechococcus elongatus (strain ATCC 33912 / PCC 7942 / FACHB-805) (Anacystis nidulans R2).